Consider the following 197-residue polypeptide: Protein shisa-4 (197 aa).

Residues M1–A27 form the signal peptide. Topologically, residues G28–A87 are extracellular. The helical transmembrane segment at G88–L108 threads the bilayer. Residues C109–A197 are Cytoplasmic-facing.

The protein belongs to the shisa family.

It localises to the membrane. This Homo sapiens (Human) protein is Protein shisa-4 (SHISA4).